The following is a 92-amino-acid chain: Small ribosomal subunit protein uS19 (92 aa).

This sequence belongs to the universal ribosomal protein uS19 family.

Protein S19 forms a complex with S13 that binds strongly to the 16S ribosomal RNA. The protein is Small ribosomal subunit protein uS19 of Buchnera aphidicola subsp. Schizaphis graminum (strain Sg).